A 248-amino-acid chain; its full sequence is Protein maestro (248 aa).

The tract at residues M1–K21 is disordered. An HEAT repeat occupies S128 to A163.

In terms of tissue distribution, ubiquitous.

The protein localises to the nucleus. It localises to the nucleolus. The protein is Protein maestro (MRO) of Homo sapiens (Human).